A 297-amino-acid chain; its full sequence is Pyrroline-5-carboxylate reductase 1 (297 aa).

Belongs to the pyrroline-5-carboxylate reductase family.

The protein resides in the cytoplasm. It catalyses the reaction L-proline + NADP(+) = (S)-1-pyrroline-5-carboxylate + NADPH + 2 H(+). The catalysed reaction is L-proline + NAD(+) = (S)-1-pyrroline-5-carboxylate + NADH + 2 H(+). The protein operates within amino-acid biosynthesis; L-proline biosynthesis; L-proline from L-glutamate 5-semialdehyde: step 1/1. Catalyzes the reduction of 1-pyrroline-5-carboxylate (PCA) to L-proline. The chain is Pyrroline-5-carboxylate reductase 1 (proH) from Bacillus subtilis (strain 168).